A 284-amino-acid chain; its full sequence is L-ribulose-5-phosphate 3-epimerase UlaE (284 aa).

Belongs to the L-ribulose-5-phosphate 3-epimerase family.

The catalysed reaction is L-ribulose 5-phosphate = L-xylulose 5-phosphate. It functions in the pathway cofactor degradation; L-ascorbate degradation; D-xylulose 5-phosphate from L-ascorbate: step 3/4. Functionally, catalyzes the isomerization of L-xylulose-5-phosphate to L-ribulose-5-phosphate. Is involved in the anaerobic L-ascorbate utilization. The polypeptide is L-ribulose-5-phosphate 3-epimerase UlaE (Salmonella dublin (strain CT_02021853)).